Here is a 299-residue protein sequence, read N- to C-terminus: Glycine--tRNA ligase alpha subunit (299 aa).

The protein belongs to the class-II aminoacyl-tRNA synthetase family. Tetramer of two alpha and two beta subunits.

Its subcellular location is the cytoplasm. The catalysed reaction is tRNA(Gly) + glycine + ATP = glycyl-tRNA(Gly) + AMP + diphosphate. The chain is Glycine--tRNA ligase alpha subunit from Dictyoglomus thermophilum (strain ATCC 35947 / DSM 3960 / H-6-12).